The sequence spans 697 residues: Pentatricopeptide repeat-containing protein 1, mitochondrial (697 aa).

The transit peptide at 1–36 directs the protein to the mitochondrion; the sequence is MLKRAHYVALHVTLNHNGLSYQRVFSCLTQFPMLRH. PPR repeat units follow at residues 257–288 and 294–328; these read RPFT…VKNK and SDVF…NVNF.

It is found in the mitochondrion. In terms of biological role, mitochondrial RNA-binding protein required for the stability of the cox2 and cox3 mRNAs. The sequence is that of Pentatricopeptide repeat-containing protein 1, mitochondrial (ppr1) from Schizosaccharomyces pombe (strain 972 / ATCC 24843) (Fission yeast).